Consider the following 615-residue polypeptide: Aspartokinase (615 aa).

Disordered stretches follow at residues 84–105 (ALQP…GTAT) and 127–171 (SSVS…SISQ). 2 stretches are compositionally biased toward low complexity: residues 90–102 (SSSG…SMSG) and 127–164 (SSVS…ATPS). The region spanning 467-537 (IHSNRKTLSH…EVTVSKDMAI (71 aa)) is the ACT domain.

It belongs to the aspartokinase family.

It catalyses the reaction L-aspartate + ATP = 4-phospho-L-aspartate + ADP. The protein operates within amino-acid biosynthesis; L-methionine biosynthesis via de novo pathway; L-homoserine from L-aspartate: step 1/3. It functions in the pathway amino-acid biosynthesis; L-threonine biosynthesis; L-threonine from L-aspartate: step 1/5. Functionally, phosphorylates aspartate, the first step in the biosynthesis of amino acids that derive from aspartate (the aspartate family of amino acids), including methioinine and threonine, the latter of which is a precursor to isoleucine. This chain is Aspartokinase, found in Cryptococcus neoformans var. grubii serotype A (strain H99 / ATCC 208821 / CBS 10515 / FGSC 9487) (Filobasidiella neoformans var. grubii).